The chain runs to 204 residues: Translation initiation factor 2 subunit beta (204 aa).

The TRAM domain occupies 146–204 (AIEEGKELEVHIESISKKGDGVARIGKYILYVAGTKAGQNVKVRITRISGQVAFTQKIL).

It belongs to the eIF-2-beta/eIF-5 family. In terms of assembly, heterotrimer composed of an alpha, a beta and a gamma chain.

EIF-2 functions in the early steps of protein synthesis by forming a ternary complex with GTP and initiator tRNA. This Methanocorpusculum labreanum (strain ATCC 43576 / DSM 4855 / Z) protein is Translation initiation factor 2 subunit beta.